Here is a 341-residue protein sequence, read N- to C-terminus: Geranylgeranyl transferase type-2 subunit beta (341 aa).

PFTB repeat units lie at residues 15–55 (KSKH…ITMN), 62–104 (QQDV…KIYD), 122–163 (RERL…SLLN), 170–211 (ADTA…AIMN), 223–264 (VKLI…SILK), and 271–313 (LKIL…SLID). Geranylgeranyl diphosphate-binding positions include 196–198 (HAA) and 243–255 (RPEK…YSWW). 3 residues coordinate Zn(2+): Asp-249, Cys-251, and His-301.

The protein belongs to the protein prenyltransferase subunit beta family. Heterodimer of an alpha and a beta subunit. Zn(2+) is required as a cofactor.

The enzyme catalyses geranylgeranyl diphosphate + L-cysteinyl-[protein] = S-geranylgeranyl-L-cysteinyl-[protein] + diphosphate. Catalyzes the transfer of a geranyl-geranyl moiety from geranyl-geranyl pyrophosphate to proteins having the C-terminal -XCC or -XCXC, where both cysteines may become modified. Acts on YPT1 and SEC4. In Candida albicans (Yeast), this protein is Geranylgeranyl transferase type-2 subunit beta (BET2).